Consider the following 136-residue polypeptide: Nucleoside diphosphate kinase (136 aa).

Residues Lys-9, Phe-57, Arg-85, Thr-91, Arg-102, and Asn-112 each coordinate ATP. The active-site Pros-phosphohistidine intermediate is His-115.

Belongs to the NDK family. Homotetramer. It depends on Mg(2+) as a cofactor.

The protein resides in the cytoplasm. The catalysed reaction is a 2'-deoxyribonucleoside 5'-diphosphate + ATP = a 2'-deoxyribonucleoside 5'-triphosphate + ADP. It carries out the reaction a ribonucleoside 5'-diphosphate + ATP = a ribonucleoside 5'-triphosphate + ADP. Functionally, major role in the synthesis of nucleoside triphosphates other than ATP. The ATP gamma phosphate is transferred to the NDP beta phosphate via a ping-pong mechanism, using a phosphorylated active-site intermediate. This is Nucleoside diphosphate kinase from Acetivibrio thermocellus (strain ATCC 27405 / DSM 1237 / JCM 9322 / NBRC 103400 / NCIMB 10682 / NRRL B-4536 / VPI 7372) (Clostridium thermocellum).